We begin with the raw amino-acid sequence, 548 residues long: Membrane protein insertase YidC (548 aa).

The chain crosses the membrane as a helical span at residues 6 to 26; it reads NLLVIALLFVSFMIWQAWEQD. Residues 28–56 form a disordered region; the sequence is NPQPQTQQTTQTTTTAAGSAADQGVPASG. Residues 29 to 42 show a composition bias toward low complexity; that stretch reads PQPQTQQTTQTTTT. Helical transmembrane passes span 350-370, 424-444, 458-478, and 499-519; these read FVGNWGFSIIIITFIVRGIMY, FPLIIQMPIFLALYYMLMGSI, LSAQDPYYILPILMGVTMFFI, and PVIFTVFFLWFPSGLVLYYIV.

This sequence belongs to the OXA1/ALB3/YidC family. Type 1 subfamily. As to quaternary structure, interacts with the Sec translocase complex via SecD. Specifically interacts with transmembrane segments of nascent integral membrane proteins during membrane integration.

The protein resides in the cell inner membrane. In terms of biological role, required for the insertion and/or proper folding and/or complex formation of integral membrane proteins into the membrane. Involved in integration of membrane proteins that insert both dependently and independently of the Sec translocase complex, as well as at least some lipoproteins. Aids folding of multispanning membrane proteins. The sequence is that of Membrane protein insertase YidC from Salmonella choleraesuis (strain SC-B67).